We begin with the raw amino-acid sequence, 233 residues long: Antiholin-like protein LrgB (233 aa).

6 helical membrane-spanning segments follow: residues 5-25, 33-53, 63-83, 97-117, 152-172, and 212-232; these read LGIN…VIAT, GFFL…FLKL, IGGD…AIPL, IFGG…LVAI, LTSL…AKIV, and IAVV…APIL.

The protein belongs to the CidB/LrgB family. LrgB subfamily.

The protein localises to the cell membrane. Inhibits the expression or activity of extracellular murein hydrolases by interacting, possibly with LrgA, with the holin-like proteins CidA and/or CidB. The LrgAB and CidAB proteins may affect the proton motive force of the membrane. May be involved in programmed cell death (PCD), possibly triggering PCD in response to antibiotics and environmental stresses. This Staphylococcus epidermidis (strain ATCC 35984 / DSM 28319 / BCRC 17069 / CCUG 31568 / BM 3577 / RP62A) protein is Antiholin-like protein LrgB.